Reading from the N-terminus, the 371-residue chain is tRNA-specific 2-thiouridylase MnmA (371 aa).

Residues 7–14 (GLSGGVDS) and Met33 contribute to the ATP site. Residues 103-105 (NPD) form an interaction with target base in tRNA region. The active-site Nucleophile is the Cys108. Cys108 and Cys201 are disulfide-bonded. Gly133 is a binding site for ATP. Residues 151-153 (KDQ) are interaction with tRNA. Cys201 acts as the Cysteine persulfide intermediate in catalysis. An interaction with tRNA region spans residues 308-309 (RY).

This sequence belongs to the MnmA/TRMU family.

The protein resides in the cytoplasm. It carries out the reaction S-sulfanyl-L-cysteinyl-[protein] + uridine(34) in tRNA + AH2 + ATP = 2-thiouridine(34) in tRNA + L-cysteinyl-[protein] + A + AMP + diphosphate + H(+). Its function is as follows. Catalyzes the 2-thiolation of uridine at the wobble position (U34) of tRNA, leading to the formation of s(2)U34. The protein is tRNA-specific 2-thiouridylase MnmA of Mycoplasmopsis pulmonis (strain UAB CTIP) (Mycoplasma pulmonis).